A 327-amino-acid polypeptide reads, in one-letter code: Lipoyl synthase (327 aa).

[4Fe-4S] cluster contacts are provided by C74, C79, C85, C100, C104, C107, and S314. The 218-residue stretch at 86–303 (FSGGTATFMI…AEEGEKMGFK (218 aa)) folds into the Radical SAM core domain.

This sequence belongs to the radical SAM superfamily. Lipoyl synthase family. [4Fe-4S] cluster serves as cofactor.

The protein localises to the cytoplasm. The enzyme catalyses [[Fe-S] cluster scaffold protein carrying a second [4Fe-4S](2+) cluster] + N(6)-octanoyl-L-lysyl-[protein] + 2 oxidized [2Fe-2S]-[ferredoxin] + 2 S-adenosyl-L-methionine + 4 H(+) = [[Fe-S] cluster scaffold protein] + N(6)-[(R)-dihydrolipoyl]-L-lysyl-[protein] + 4 Fe(3+) + 2 hydrogen sulfide + 2 5'-deoxyadenosine + 2 L-methionine + 2 reduced [2Fe-2S]-[ferredoxin]. Its pathway is protein modification; protein lipoylation via endogenous pathway; protein N(6)-(lipoyl)lysine from octanoyl-[acyl-carrier-protein]: step 2/2. Catalyzes the radical-mediated insertion of two sulfur atoms into the C-6 and C-8 positions of the octanoyl moiety bound to the lipoyl domains of lipoate-dependent enzymes, thereby converting the octanoylated domains into lipoylated derivatives. The polypeptide is Lipoyl synthase (Pseudomonas aeruginosa (strain LESB58)).